Consider the following 115-residue polypeptide: Peptidyl-tRNA hydrolase (115 aa).

The protein belongs to the PTH2 family.

The protein resides in the cytoplasm. It carries out the reaction an N-acyl-L-alpha-aminoacyl-tRNA + H2O = an N-acyl-L-amino acid + a tRNA + H(+). Functionally, the natural substrate for this enzyme may be peptidyl-tRNAs which drop off the ribosome during protein synthesis. The polypeptide is Peptidyl-tRNA hydrolase (Archaeoglobus fulgidus (strain ATCC 49558 / DSM 4304 / JCM 9628 / NBRC 100126 / VC-16)).